Consider the following 59-residue polypeptide: Large ribosomal subunit protein bL32 (59 aa).

The segment at 1–20 (MAVPRNRHSNARKNIRRSHH) is disordered.

This sequence belongs to the bacterial ribosomal protein bL32 family.

In Chlamydia muridarum (strain MoPn / Nigg), this protein is Large ribosomal subunit protein bL32 (rpmF).